The following is a 305-amino-acid chain: NAD kinase 2 (305 aa).

Catalysis depends on D78, which acts as the Proton acceptor. NAD(+) is bound by residues 78–79 (DG), 152–153 (NE), D182, 193–198 (TAYSLS), and N251.

The protein belongs to the NAD kinase family. A divalent metal cation is required as a cofactor.

Its subcellular location is the cytoplasm. It carries out the reaction NAD(+) + ATP = ADP + NADP(+) + H(+). Involved in the regulation of the intracellular balance of NAD and NADP, and is a key enzyme in the biosynthesis of NADP. Catalyzes specifically the phosphorylation on 2'-hydroxyl of the adenosine moiety of NAD to yield NADP. The chain is NAD kinase 2 from Synechococcus sp. (strain ATCC 27144 / PCC 6301 / SAUG 1402/1) (Anacystis nidulans).